Here is a 567-residue protein sequence, read N- to C-terminus: DNA ligase (567 aa).

Residue Glu-246 participates in ATP binding. Lys-248 serves as the catalytic N6-AMP-lysine intermediate. ATP-binding residues include Arg-253, Arg-268, Glu-298, Phe-339, Arg-415, and Lys-421.

The protein belongs to the ATP-dependent DNA ligase family. Requires Mg(2+) as cofactor.

The enzyme catalyses ATP + (deoxyribonucleotide)n-3'-hydroxyl + 5'-phospho-(deoxyribonucleotide)m = (deoxyribonucleotide)n+m + AMP + diphosphate.. Its function is as follows. DNA ligase that seals nicks in double-stranded DNA during DNA replication, DNA recombination and DNA repair. The chain is DNA ligase from Nanoarchaeum equitans (strain Kin4-M).